The sequence spans 596 residues: Fructan 1-exohydrolase w2 (596 aa).

The first 20 residues, 1–20, serve as a signal peptide directing secretion; that stretch reads MAQAWAFLLPVLVLGSYVTS. Asp-75 is a catalytic residue. N-linked (GlcNAc...) asparagine glycosylation is found at Asn-168, Asn-236, and Asn-248. Residues Cys-446 and Cys-492 are joined by a disulfide bond. Asn-567 carries an N-linked (GlcNAc...) asparagine glycan.

It belongs to the glycosyl hydrolase 32 family.

It carries out the reaction Hydrolysis of terminal, non-reducing (2-&gt;1)-linked beta-D-fructofuranose residues in fructans.. With respect to regulation, inhibited by sucrose. Its function is as follows. Hydrolyzes inulin-type beta-(2,1)-fructans, but not beta-(2,1)-linkages in branched fructans. Has low activity against beta-(2,6)-linked fructans. May play a role as a beta-(2,1)-trimmer during graminan biosynthesis. This is Fructan 1-exohydrolase w2 from Triticum aestivum (Wheat).